Here is a 472-residue protein sequence, read N- to C-terminus: Chromosomal replication initiator protein DnaA (472 aa).

A domain I, interacts with DnaA modulators region spans residues 1 to 73; that stretch reads MSNMEQDRWS…LSCWQAELPE (73 aa). Residues 73-128 are domain II; sequence EVNRVDLTVRSPVRCAAPAKEAPAPVESRRDEQRPSAERSNGATPVSANHDALGGS. Residues 89–124 are disordered; the sequence is APAKEAPAPVESRRDEQRPSAERSNGATPVSANHDA. Residues 99 to 109 show a composition bias toward basic and acidic residues; that stretch reads ESRRDEQRPSA. The span at 110 to 119 shows a compositional bias: polar residues; that stretch reads ERSNGATPVS. The domain III, AAA+ region stretch occupies residues 129–351; it reads PLDPRLTFAS…GAINRLLAHS (223 aa). Positions 176, 178, 179, and 180 each coordinate ATP. A domain IV, binds dsDNA region spans residues 352-472; the sequence is KLNNQPVTLE…VESLKRQLQE (121 aa).

This sequence belongs to the DnaA family. Oligomerizes as a right-handed, spiral filament on DNA at oriC.

Its subcellular location is the cytoplasm. Its function is as follows. Plays an essential role in the initiation and regulation of chromosomal replication. ATP-DnaA binds to the origin of replication (oriC) to initiate formation of the DNA replication initiation complex once per cell cycle. Binds the DnaA box (a 9 base pair repeat at the origin) and separates the double-stranded (ds)DNA. Forms a right-handed helical filament on oriC DNA; dsDNA binds to the exterior of the filament while single-stranded (ss)DNA is stabiized in the filament's interior. The ATP-DnaA-oriC complex binds and stabilizes one strand of the AT-rich DNA unwinding element (DUE), permitting loading of DNA polymerase. After initiation quickly degrades to an ADP-DnaA complex that is not apt for DNA replication. Binds acidic phospholipids. The sequence is that of Chromosomal replication initiator protein DnaA from Rhodopseudomonas palustris (strain TIE-1).